The primary structure comprises 447 residues: GTPase Der (447 aa).

EngA-type G domains follow at residues 4–165 (KIIT…SVEE) and 180–357 (LQIV…KIWN). Residues 10–17 (GRPNVGKS), 57–61 (DTPGL), 119–122 (NKCE), 186–193 (GRPNAGKS), 233–237 (DTAGL), and 298–301 (NKWD) contribute to the GTP site. The 86-residue stretch at 358–443 (KKITTNKLNK…PIRFTYVKNK (86 aa)) folds into the KH-like domain.

Belongs to the TRAFAC class TrmE-Era-EngA-EngB-Septin-like GTPase superfamily. EngA (Der) GTPase family. As to quaternary structure, associates with the 50S ribosomal subunit.

Functionally, GTPase that plays an essential role in the late steps of ribosome biogenesis. The protein is GTPase Der of Rickettsia prowazekii (strain Madrid E).